The chain runs to 173 residues: 6,7-dimethyl-8-ribityllumazine synthase (173 aa).

5-amino-6-(D-ribitylamino)uracil contacts are provided by residues phenylalanine 24, 58 to 60 (ALE), and 82 to 84 (AVI). Residue 87–88 (ET) participates in (2S)-2-hydroxy-3-oxobutyl phosphate binding. The active-site Proton donor is the histidine 90. Asparagine 115 lines the 5-amino-6-(D-ribitylamino)uracil pocket. Arginine 129 lines the (2S)-2-hydroxy-3-oxobutyl phosphate pocket. Residues 150–173 (ALEPEEDDEDDEDEDFDDEEDDGR) form a disordered region. Positions 152-173 (EPEEDDEDDEDEDFDDEEDDGR) are enriched in acidic residues.

It belongs to the DMRL synthase family.

It carries out the reaction (2S)-2-hydroxy-3-oxobutyl phosphate + 5-amino-6-(D-ribitylamino)uracil = 6,7-dimethyl-8-(1-D-ribityl)lumazine + phosphate + 2 H2O + H(+). It participates in cofactor biosynthesis; riboflavin biosynthesis; riboflavin from 2-hydroxy-3-oxobutyl phosphate and 5-amino-6-(D-ribitylamino)uracil: step 1/2. Catalyzes the formation of 6,7-dimethyl-8-ribityllumazine by condensation of 5-amino-6-(D-ribitylamino)uracil with 3,4-dihydroxy-2-butanone 4-phosphate. This is the penultimate step in the biosynthesis of riboflavin. The sequence is that of 6,7-dimethyl-8-ribityllumazine synthase from Bordetella pertussis (strain Tohama I / ATCC BAA-589 / NCTC 13251).